A 210-amino-acid polypeptide reads, in one-letter code: Probable GTP-binding protein EngB (210 aa).

Residues 27-201 form the EngB-type G domain; that stretch reads MGIEVAFAGR…HQKLDIWFSQ (175 aa). Residues 35-42, 62-66, 80-83, 147-150, and 180-182 each bind GTP; these read GRSNAGKS, GRTQL, DLPG, TKAD, and FSV. 2 residues coordinate Mg(2+): S42 and T64.

This sequence belongs to the TRAFAC class TrmE-Era-EngA-EngB-Septin-like GTPase superfamily. EngB GTPase family. Mg(2+) is required as a cofactor.

Functionally, necessary for normal cell division and for the maintenance of normal septation. The chain is Probable GTP-binding protein EngB from Photorhabdus laumondii subsp. laumondii (strain DSM 15139 / CIP 105565 / TT01) (Photorhabdus luminescens subsp. laumondii).